Consider the following 198-residue polypeptide: V-type ATP synthase subunit E (198 aa).

Belongs to the V-ATPase E subunit family.

In terms of biological role, produces ATP from ADP in the presence of a proton gradient across the membrane. This is V-type ATP synthase subunit E from Clostridium perfringens (strain SM101 / Type A).